The following is an 864-amino-acid chain: Leucine--tRNA ligase (864 aa).

The 'HIGH' region motif lies at 42–52; sequence PYPSGKLHMGH. A 'KMSKS' region motif is present at residues 624–628; that stretch reads KMSKS. ATP is bound at residue K627.

It belongs to the class-I aminoacyl-tRNA synthetase family.

It localises to the cytoplasm. The enzyme catalyses tRNA(Leu) + L-leucine + ATP = L-leucyl-tRNA(Leu) + AMP + diphosphate. The chain is Leucine--tRNA ligase from Burkholderia pseudomallei (strain 668).